A 121-amino-acid chain; its full sequence is Large ribosomal subunit protein uL3 (121 aa).

Glutamine 62 bears the N5-methylglutamine mark.

Belongs to the universal ribosomal protein uL3 family. As to quaternary structure, part of the 50S ribosomal subunit. Forms a cluster with proteins L14 and L19. Methylated by PrmB.

One of the primary rRNA binding proteins, it binds directly near the 3'-end of the 23S rRNA, where it nucleates assembly of the 50S subunit. The sequence is that of Large ribosomal subunit protein uL3 (rplC) from Aggregatibacter actinomycetemcomitans (Actinobacillus actinomycetemcomitans).